The following is a 256-amino-acid chain: Pimeloyl-[acyl-carrier protein] methyl ester esterase (256 aa).

An AB hydrolase-1 domain is found at 15 to 242 (HLVLLHGWGL…AAHAPFISHP (228 aa)). Residues Trp22, 82-83 (SL), and 143-147 (FLALQ) contribute to the substrate site. Ser82 (nucleophile) is an active-site residue. Catalysis depends on residues Asp207 and His235. Position 235 (His235) interacts with substrate.

The protein belongs to the AB hydrolase superfamily. Carboxylesterase BioH family. As to quaternary structure, monomer.

The protein localises to the cytoplasm. It carries out the reaction 6-carboxyhexanoyl-[ACP] methyl ester + H2O = 6-carboxyhexanoyl-[ACP] + methanol + H(+). It functions in the pathway cofactor biosynthesis; biotin biosynthesis. In terms of biological role, the physiological role of BioH is to remove the methyl group introduced by BioC when the pimeloyl moiety is complete. It allows to synthesize pimeloyl-ACP via the fatty acid synthetic pathway through the hydrolysis of the ester bonds of pimeloyl-ACP esters. The protein is Pimeloyl-[acyl-carrier protein] methyl ester esterase of Escherichia coli O139:H28 (strain E24377A / ETEC).